We begin with the raw amino-acid sequence, 398 residues long: Histidinol-phosphate aminotransferase (398 aa).

The span at methionine 1–proline 10 shows a compositional bias: polar residues. The interval methionine 1–proline 30 is disordered. Lysine 234 is modified (N6-(pyridoxal phosphate)lysine).

This sequence belongs to the class-II pyridoxal-phosphate-dependent aminotransferase family. Histidinol-phosphate aminotransferase subfamily. As to quaternary structure, homodimer. Pyridoxal 5'-phosphate serves as cofactor.

It carries out the reaction L-histidinol phosphate + 2-oxoglutarate = 3-(imidazol-4-yl)-2-oxopropyl phosphate + L-glutamate. Its pathway is amino-acid biosynthesis; L-histidine biosynthesis; L-histidine from 5-phospho-alpha-D-ribose 1-diphosphate: step 7/9. The protein is Histidinol-phosphate aminotransferase of Mycobacterium avium (strain 104).